A 265-amino-acid polypeptide reads, in one-letter code: tRNA pseudouridine synthase A (265 aa).

Asp58 (nucleophile) is an active-site residue. Tyr116 is a substrate binding site.

Belongs to the tRNA pseudouridine synthase TruA family. In terms of assembly, homodimer.

It catalyses the reaction uridine(38/39/40) in tRNA = pseudouridine(38/39/40) in tRNA. Functionally, formation of pseudouridine at positions 38, 39 and 40 in the anticodon stem and loop of transfer RNAs. The sequence is that of tRNA pseudouridine synthase A from Neisseria meningitidis serogroup C (strain 053442).